A 435-amino-acid chain; its full sequence is C4-dicarboxylate transport protein (435 aa).

Helical transmembrane passes span 4–24 (SLFK…ILLG), 44–64 (LIKM…IAGM), 76–96 (VALL…LIIV), 142–162 (IGAF…LFGF), 184–204 (VIFG…FGAM), 222–242 (LIIC…GTIA), 289–309 (VVGL…SIYL), 326–346 (IFHQ…VAGV), and 352–372 (IVLA…LALI).

Belongs to the dicarboxylate/amino acid:cation symporter (DAACS) (TC 2.A.23) family.

It is found in the cell inner membrane. Functionally, responsible for the transport of dicarboxylates such as succinate, fumarate, and malate from the periplasm across the membrane. This chain is C4-dicarboxylate transport protein, found in Salmonella paratyphi A (strain ATCC 9150 / SARB42).